The chain runs to 459 residues: Asparagine--tRNA ligase (459 aa).

It belongs to the class-II aminoacyl-tRNA synthetase family. Homodimer.

It is found in the cytoplasm. It carries out the reaction tRNA(Asn) + L-asparagine + ATP = L-asparaginyl-tRNA(Asn) + AMP + diphosphate + H(+). This is Asparagine--tRNA ligase from Pelobacter propionicus (strain DSM 2379 / NBRC 103807 / OttBd1).